The sequence spans 439 residues: Protein translocase subunit SecY (439 aa).

Helical transmembrane passes span 23–43 (IASVVIALIIFRIGSFIPIPG), 77–97 (IFALGIMPYISSSIIIQLLTL), 125–145 (LVLALFQSIGIVTSLPKISGM), 154–174 (FYFYFTAIIILVTGTMFLMWL), 187–207 (ISIIIFIGIIAGLPSAIVHTI), 217–237 (ILLFLCVLILIFSVVFLVVFI), 274–294 (VIPAIFASSVVLFPVTIISWF), 317–337 (YLILYVFSIIFFCFFYTGLVF), 369–389 (IMIRLTLFGSLYIAFICLIPE), and 397–417 (VPFYFGGTSLLIVVVVIMDFI).

The protein belongs to the SecY/SEC61-alpha family. In terms of assembly, component of the Sec protein translocase complex. Heterotrimer consisting of SecY, SecE and SecG subunits. The heterotrimers can form oligomers, although 1 heterotrimer is thought to be able to translocate proteins. Interacts with the ribosome. Interacts with SecDF, and other proteins may be involved. Interacts with SecA.

Its subcellular location is the cell membrane. Functionally, the central subunit of the protein translocation channel SecYEG. Consists of two halves formed by TMs 1-5 and 6-10. These two domains form a lateral gate at the front which open onto the bilayer between TMs 2 and 7, and are clamped together by SecE at the back. The channel is closed by both a pore ring composed of hydrophobic SecY resides and a short helix (helix 2A) on the extracellular side of the membrane which forms a plug. The plug probably moves laterally to allow the channel to open. The ring and the pore may move independently. The sequence is that of Protein translocase subunit SecY from Buchnera aphidicola subsp. Schizaphis graminum (strain Sg).